A 303-amino-acid polypeptide reads, in one-letter code: tRNA pseudouridine synthase B (303 aa).

Asp-38 serves as the catalytic Nucleophile.

This sequence belongs to the pseudouridine synthase TruB family. Type 1 subfamily.

It carries out the reaction uridine(55) in tRNA = pseudouridine(55) in tRNA. Functionally, responsible for synthesis of pseudouridine from uracil-55 in the psi GC loop of transfer RNAs. This Levilactobacillus brevis (strain ATCC 367 / BCRC 12310 / CIP 105137 / JCM 1170 / LMG 11437 / NCIMB 947 / NCTC 947) (Lactobacillus brevis) protein is tRNA pseudouridine synthase B.